Consider the following 90-residue polypeptide: RNA-binding protein Hfq (90 aa).

The Sm domain maps to 9-68; sequence DPFLNALRRERVPVSIYLVNGIKLQGQVESFDQFVILLKNTVSQMVYKHAISTVVPARPF.

Belongs to the Hfq family. In terms of assembly, homohexamer.

In terms of biological role, RNA chaperone that binds small regulatory RNA (sRNAs) and mRNAs to facilitate mRNA translational regulation in response to envelope stress, environmental stress and changes in metabolite concentrations. Also binds with high specificity to tRNAs. In Shewanella baltica (strain OS155 / ATCC BAA-1091), this protein is RNA-binding protein Hfq.